The sequence spans 200 residues: Lipopolysaccharide core heptose(II)-phosphate phosphatase (200 aa).

An N-terminal signal peptide occupies residues 1-25 (MLAFCRSSLKSKKYFIILLALAAIA).

Belongs to the phosphoglycerate mutase family. Ais subfamily.

The protein localises to the periplasm. Its pathway is bacterial outer membrane biogenesis; lipopolysaccharide metabolism. Its function is as follows. Catalyzes the dephosphorylation of heptose(II) of the outer membrane lipopolysaccharide core. This chain is Lipopolysaccharide core heptose(II)-phosphate phosphatase, found in Escherichia coli O157:H7.